We begin with the raw amino-acid sequence, 563 residues long: Lipoprotein LpqB (563 aa).

Positions 1–19 (MRRMKALTAAMTAALLVSG) are cleaved as a signal peptide. Residue cysteine 20 is the site of N-palmitoyl cysteine attachment. Cysteine 20 carries S-diacylglycerol cysteine lipidation.

Belongs to the LpqB lipoprotein family.

It localises to the cell membrane. The chain is Lipoprotein LpqB from Corynebacterium efficiens (strain DSM 44549 / YS-314 / AJ 12310 / JCM 11189 / NBRC 100395).